The chain runs to 317 residues: uncharacterized protein (317 aa).

The protein belongs to the asfivirus F317L family.

It is found in the virion. This is an uncharacterized protein from African swine fever virus (strain Badajoz 1971 Vero-adapted) (Ba71V).